The following is a 77-amino-acid chain: MINMATITIDDDVYKELLKLKGRKSVSEFIKELLEERKRKNLDVFMIAFGSRSEEDVEKLKKELKEAEKWMQSLIQV.

The protein belongs to the UPF0330 family.

In terms of biological role, possibly the antitoxin component of a type II toxin-antitoxin (TA) system. Its cognate toxin is VapC3 (Potential). The polypeptide is Putative antitoxin VapB3 (vapB3) (Methanocaldococcus jannaschii (strain ATCC 43067 / DSM 2661 / JAL-1 / JCM 10045 / NBRC 100440) (Methanococcus jannaschii)).